Here is a 1116-residue protein sequence, read N- to C-terminus: Protein STICHEL-like 1 (1116 aa).

2 disordered regions span residues 95–138 (RTSS…LEET) and 225–244 (KFLR…NSTP). The span at 115-124 (NDDDDDDDDV) shows a compositional bias: acidic residues. 2 short sequence motifs (PEST) span residues 257-282 (RNPS…FKGR) and 402-422 (KSQD…ESIQ). Residue 463-470 (GPRGTGKT) coordinates ATP. The Zn(2+) site is built by cysteine 482, cysteine 492, cysteine 495, and cysteine 498. Residues 726–760 (EAFLDRRNLTEADLERLKHALKLLSEAEKQLRVST) are a coiled coil. The interval 777–798 (PSPGTTHTGSSRRQSSRATEES) is disordered. A compositionally biased stretch (polar residues) spans 778-793 (SPGTTHTGSSRRQSSR).

The protein belongs to the DnaX/STICHEL family.

The protein is Protein STICHEL-like 1 of Arabidopsis thaliana (Mouse-ear cress).